A 98-amino-acid chain; its full sequence is ESAT-6-like protein EsxJ (98 aa).

It belongs to the WXG100 family. CFP-10 subfamily.

The protein localises to the secreted. In Mycobacterium bovis (strain ATCC BAA-935 / AF2122/97), this protein is ESAT-6-like protein EsxJ.